A 273-amino-acid chain; its full sequence is Type II pantothenate kinase (273 aa).

Asp8–Lys15 is an ATP binding site. Catalysis depends on Glu76, which acts as the Proton acceptor. ATP contacts are provided by residues Thr105, Gly127–Met131, Phe143, and Ser230.

It belongs to the type II pantothenate kinase family. As to quaternary structure, homodimer.

The protein localises to the cytoplasm. The enzyme catalyses (R)-pantothenate + ATP = (R)-4'-phosphopantothenate + ADP + H(+). It functions in the pathway cofactor biosynthesis; coenzyme A biosynthesis; CoA from (R)-pantothenate: step 1/5. Functionally, catalyzes the phosphorylation of pantothenate (Pan), the first step in CoA biosynthesis. The polypeptide is Type II pantothenate kinase (Bacillus cereus (strain G9842)).